The primary structure comprises 204 residues: Dephospho-CoA kinase (204 aa).

The DPCK domain maps to 13-204 (RIGLTGGIAS…LWKNTIKKLV (192 aa)). 21–26 (ASGKST) lines the ATP pocket.

It belongs to the CoaE family.

The protein localises to the cytoplasm. The enzyme catalyses 3'-dephospho-CoA + ATP = ADP + CoA + H(+). It participates in cofactor biosynthesis; coenzyme A biosynthesis; CoA from (R)-pantothenate: step 5/5. Catalyzes the phosphorylation of the 3'-hydroxyl group of dephosphocoenzyme A to form coenzyme A. This is Dephospho-CoA kinase from Prochlorococcus marinus subsp. pastoris (strain CCMP1986 / NIES-2087 / MED4).